Here is a 185-residue protein sequence, read N- to C-terminus: Elongation factor P (185 aa).

It belongs to the elongation factor P family.

Its subcellular location is the cytoplasm. It functions in the pathway protein biosynthesis; polypeptide chain elongation. In terms of biological role, involved in peptide bond synthesis. Stimulates efficient translation and peptide-bond synthesis on native or reconstituted 70S ribosomes in vitro. Probably functions indirectly by altering the affinity of the ribosome for aminoacyl-tRNA, thus increasing their reactivity as acceptors for peptidyl transferase. The sequence is that of Elongation factor P from Clostridium kluyveri (strain ATCC 8527 / DSM 555 / NBRC 12016 / NCIMB 10680 / K1).